We begin with the raw amino-acid sequence, 231 residues long: Lipoprotein-releasing system ATP-binding protein LolD (231 aa).

The ABC transporter domain occupies 6–231 (LQVQAVSKSY…YLQAVAEHAQ (226 aa)). 42 to 49 (GTSGSGKS) serves as a coordination point for ATP.

It belongs to the ABC transporter superfamily. Lipoprotein translocase (TC 3.A.1.125) family. The complex is composed of two ATP-binding proteins (LolD) and two transmembrane proteins (LolC and LolE).

It is found in the cell inner membrane. Part of the ABC transporter complex LolCDE involved in the translocation of mature outer membrane-directed lipoproteins, from the inner membrane to the periplasmic chaperone, LolA. Responsible for the formation of the LolA-lipoprotein complex in an ATP-dependent manner. This chain is Lipoprotein-releasing system ATP-binding protein LolD, found in Shewanella sp. (strain MR-4).